Consider the following 430-residue polypeptide: Asparagine--tRNA ligase (430 aa).

It belongs to the class-II aminoacyl-tRNA synthetase family. Homodimer.

It is found in the cytoplasm. It carries out the reaction tRNA(Asn) + L-asparagine + ATP = L-asparaginyl-tRNA(Asn) + AMP + diphosphate + H(+). This is Asparagine--tRNA ligase from Geobacillus thermodenitrificans (strain NG80-2).